A 683-amino-acid polypeptide reads, in one-letter code: Transforming growth factor-beta-induced protein ig-h3 (683 aa).

The signal sequence occupies residues 1–23; sequence MALLGRLLPLALALALGPAATHA. Residue Ser-37 is modified to Phosphoserine. Positions 45-99 constitute an EMI domain; that stretch reads GPNVCAVQKLIGTNKKYFTNCKQWYQRKICGKSTVISYECCPGYEKVPGEKGCPA. Disulfide bonds link Cys-49-Cys-85, Cys-74-Cys-339, Cys-84-Cys-97, Cys-214-Cys-317, and Cys-473-Cys-478. Cys-65 carries the S-cysteinyl cysteine modification. 4 consecutive FAS1 domains span residues 103-236, 240-371, 375-498, and 502-632; these read LSNL…DKVI, TNNI…DELL, SAKT…DRML, and MGTV…NTVL. A Cell attachment site motif is present at residues 642-644; that stretch reads RGD.

As to quaternary structure, binds to type I, II, and IV collagens. Gamma-carboxyglutamated; gamma-carboxyglutamate residues are formed by vitamin K dependent carboxylation; these residues may be required for binding to calcium. According to a report, does not contain any vitamin K-dependent gamma-carboxyglutamate residues. In terms of processing, the EMI domain contains 2 expected intradomain disulfide bridges (Cys-49-Cys85 and Cys-84-Cys-97) and one unusual interdomain disulfide bridge to the second FAS1 domain (Cys-74-Cys-339). This arrangement violates the predicted disulfide bridge pattern of an EMI domain. Widely distributed in various tissues except for the brain. High levels in corneal epithelium.

Its subcellular location is the secreted. It is found in the extracellular space. It localises to the extracellular matrix. Functionally, plays a role in cell adhesion. May play a role in cell-collagen interactions. This chain is Transforming growth factor-beta-induced protein ig-h3 (TGFBI), found in Sus scrofa (Pig).